Reading from the N-terminus, the 217-residue chain is UPF0193 protein EVG1 (217 aa).

This sequence belongs to the UPF0193 (EVG1) family.

The chain is UPF0193 protein EVG1 (C22orf23) from Homo sapiens (Human).